Here is a 653-residue protein sequence, read N- to C-terminus: Pentatricopeptide repeat-containing protein At3g14730 (653 aa).

PPR repeat units lie at residues 59–93 (NVATCIATLQRCAQRKDYVSGQQIHGFMVRKGFLD), 95–119 (SPRAGTSLVNMYAKCGLMRRAVLVF), 125–159 (DVFGYNALISGFVVNGSPLDAMETYREMRANGILP), 160–193 (DKYTFPSLLKGSDAMELSDVKKVHGLAFKLGFDS), 194–224 (DCYVGSGLVTSYSKFMSVEDAQKVFDELPDR), 226–260 (DSVLWNALVNGYSQIFRFEDALLVFSKMREEGVGV), 261–295 (SRHTITSVLSAFTVSGDIDNGRSIHGLAVKTGSGS), 296–326 (DIVVSNALIDMYGKSKWLEEANSIFEAMDER), 327–361 (DLFTWNSVLCVHDYCGDHDGTLALFERMLCSGIRP), 362–396 (DIVTLTTVLPTCGRLASLRQGREIHGYMIVSGLLN), 401–431 (NEFIHNSLMDMYVKCGDLRDARMVFDSMRVK), 432–466 (DSASWNIMINGYGVQSCGELALDMFSCMCRAGVKP), 467–497 (DEITFVGLLQACSHSGFLNEGRNFLAQMETV), and 503–537 (TSDHYACVIDMLGRADKLEEAYELAISKPICDNPV). A type E motif region spans residues 538–613 (VWRSILSSCR…TPGCSWIVLK (76 aa)). The tract at residues 614 to 644 (NGVHTFFTGNQTHPEFKSIHDWLSLVISHMH) is type E(+) motif.

Belongs to the PPR family. PCMP-E subfamily.

In Arabidopsis thaliana (Mouse-ear cress), this protein is Pentatricopeptide repeat-containing protein At3g14730 (PCMP-E31).